Reading from the N-terminus, the 391-residue chain is Acetylgalactosaminyl-O-glycosyl-glycoprotein beta-1,3-N-acetylglucosaminyltransferase (391 aa).

Over 1–11 (MALPSSRRFKS) the chain is Cytoplasmic. Residues 12 to 32 (PTTLAFFLVGVTLVVLNQWFL) form a helical; Signal-anchor for type II membrane protein membrane-spanning segment. Residues 33-391 (QEHRQEKAKG…TAGEQNPDAH (359 aa)) lie on the Lumenal side of the membrane. Residues N68 and N191 are each glycosylated (N-linked (GlcNAc...) asparagine).

This sequence belongs to the glycosyltransferase 31 family.

It localises to the golgi apparatus membrane. The catalysed reaction is a 3-O-[N-acetyl-alpha-D-galactosaminyl]-L-threonyl-[protein] + UDP-N-acetyl-alpha-D-glucosamine = a 3-O-[N-acetyl-beta-D-glucosaminyl-(1-&gt;3)-N-acetyl-alpha-D-galactosaminyl]-L-threonyl-[protein] + UDP + H(+). It carries out the reaction a 3-O-[N-acetyl-alpha-D-galactosaminyl]-L-seryl-[protein] + UDP-N-acetyl-alpha-D-glucosamine = 3-O-[N-acetyl-beta-D-glucosaminyl-(1-&gt;3)-N-acetyl-alpha-D-galactosaminyl]-L-seryl-[protein] + UDP + H(+). Its pathway is protein modification; protein glycosylation. Beta-1,3-N-acetylglucosaminyltransferase that synthesizes the core 3 structure of the O-glycan, an important precursor in the biosynthesis of mucin-type glycoproteins. Plays an important role in the synthesis of mucin-type O-glycans in digestive organs. The sequence is that of Acetylgalactosaminyl-O-glycosyl-glycoprotein beta-1,3-N-acetylglucosaminyltransferase (B3gnt6) from Mus musculus (Mouse).